Consider the following 280-residue polypeptide: Ribose-phosphate pyrophosphokinase (280 aa).

Residues 32–34 (DGE) and 89–90 (RQ) each bind ATP. Mg(2+)-binding residues include His-122 and Asp-160. Residue Lys-183 is part of the active site. D-ribose 5-phosphate is bound by residues Arg-185, Asp-209, and 213–217 (STGGT).

It belongs to the ribose-phosphate pyrophosphokinase family. Class III (archaeal) subfamily. It depends on Mg(2+) as a cofactor.

The protein localises to the cytoplasm. The catalysed reaction is D-ribose 5-phosphate + ATP = 5-phospho-alpha-D-ribose 1-diphosphate + AMP + H(+). The protein operates within metabolic intermediate biosynthesis; 5-phospho-alpha-D-ribose 1-diphosphate biosynthesis; 5-phospho-alpha-D-ribose 1-diphosphate from D-ribose 5-phosphate (route I): step 1/1. Its activity is regulated as follows. Activated by Co(2+) and Ni(2+) ions, however Mg(2+) ion shows almost no significant effect on the activity. Equally inhibited by ADP, CTP and GTP, while dTTP and UTP are less inhibitory. Its function is as follows. Involved in the biosynthesis of the central metabolite phospho-alpha-D-ribosyl-1-pyrophosphate (PRPP) via the transfer of pyrophosphoryl group from ATP to 1-hydroxyl of ribose-5-phosphate (Rib-5-P). It can also use CTP and GTP as substrates in addition to ATP. This chain is Ribose-phosphate pyrophosphokinase, found in Thermococcus kodakarensis (strain ATCC BAA-918 / JCM 12380 / KOD1) (Pyrococcus kodakaraensis (strain KOD1)).